The following is a 551-amino-acid chain: Cytochrome P450 monooxygenase FCK2 (551 aa).

The next 3 membrane-spanning stretches (helical) occupy residues 8–28 (FDPA…VFIF), 35–55 (LHVF…VYIV), and 69–89 (VTTI…ISIL). The N-linked (GlcNAc...) asparagine glycan is linked to Asn-258. Cys-493 is a heme binding site.

This sequence belongs to the cytochrome P450 family. Heme serves as cofactor.

It is found in the membrane. The protein operates within secondary metabolite biosynthesis. In terms of biological role, cytochrome P450 monooxygenase; part of the gene cluster that mediates the biosynthesis of cytokinins such as fusatin, fusatinic acids or 8-oxofusatin, known for their growth promoting and anti-senescence activities toward host plants. FCK1 is a bifunctional enzyme that performs the first steps in the biosynthesis of Fusarium cytokinins. It first condenses adenosine monophosphate (AMP) with dimethylallyl diphosphate (DMAPP) to yield isoprenyl adenosine monophosphate. It then catalyzes the removal of the phosphoribose to produce isopentenylaldehyde. The cytochrome P450 monooxygenase then converts isopentenylaldehyde to trans-zeatin. A condensation step converts trans-zeatin to fusatin which is further modified to produce fusatinic acid. The mechanism for oxidation of fusatin to fusatinic acid remains unknown. 8-oxofusatin could be produced through several pathways, via direct oxygenation of fusatin, or via the 8-oxo-pentenyladenine intermediate which itself must arise from either the prenylation of 8-oxo-AMP by FCK1 and/or oxygenation of isopentenylaldehyde. Both the FCK3 and FCK4 enzymes act downstream of the identified cytokinins to produce yet unidentified compounds. This Fusarium pseudograminearum (strain CS3096) (Wheat and barley crown-rot fungus) protein is Cytochrome P450 monooxygenase FCK2.